Consider the following 180-residue polypeptide: Probable chorismate pyruvate-lyase (180 aa).

Substrate is bound by residues Arg-73, Leu-111, and Glu-170.

The protein belongs to the UbiC family.

Its subcellular location is the cytoplasm. The catalysed reaction is chorismate = 4-hydroxybenzoate + pyruvate. It functions in the pathway cofactor biosynthesis; ubiquinone biosynthesis. Removes the pyruvyl group from chorismate, with concomitant aromatization of the ring, to provide 4-hydroxybenzoate (4HB) for the ubiquinone pathway. This Nitrosospira multiformis (strain ATCC 25196 / NCIMB 11849 / C 71) protein is Probable chorismate pyruvate-lyase.